A 291-amino-acid chain; its full sequence is Acetyl-coenzyme A carboxylase carboxyl transferase subunit beta (291 aa).

The region spanning 34-291 is the CoA carboxyltransferase N-terminal domain; that stretch reads MWTKCSNCNN…LILHGVNKYE (258 aa). Positions 38, 41, 57, and 60 each coordinate Zn(2+). Residues 38–60 form a C4-type zinc finger; that stretch reads CSNCNNMIYYEDLENNKYVCTKC.

Belongs to the AccD/PCCB family. In terms of assembly, acetyl-CoA carboxylase is a heterohexamer composed of biotin carboxyl carrier protein (AccB), biotin carboxylase (AccC) and two subunits each of ACCase subunit alpha (AccA) and ACCase subunit beta (AccD). Zn(2+) serves as cofactor.

Its subcellular location is the cytoplasm. The catalysed reaction is N(6)-carboxybiotinyl-L-lysyl-[protein] + acetyl-CoA = N(6)-biotinyl-L-lysyl-[protein] + malonyl-CoA. The protein operates within lipid metabolism; malonyl-CoA biosynthesis; malonyl-CoA from acetyl-CoA: step 1/1. Component of the acetyl coenzyme A carboxylase (ACC) complex. Biotin carboxylase (BC) catalyzes the carboxylation of biotin on its carrier protein (BCCP) and then the CO(2) group is transferred by the transcarboxylase to acetyl-CoA to form malonyl-CoA. The protein is Acetyl-coenzyme A carboxylase carboxyl transferase subunit beta of Clostridium botulinum (strain Eklund 17B / Type B).